The following is a 133-amino-acid chain: uncharacterized protein (133 aa).

4 helical membrane-spanning segments follow: residues 5-27 (KLFF…FSLI), 42-64 (IAWN…YSLY), 77-99 (ALIS…TFSS), and 103-125 (LVWW…LLLK).

The protein resides in the cell membrane. This is an uncharacterized protein from Bacillus subtilis (strain 168).